The sequence spans 690 residues: NF-kappa-B-repressing factor (690 aa).

Residues 1 to 296 (MEKILQMAEG…FKHTFGEDLV (296 aa)) form an active repression domain region. A Nuclear localization signal motif is present at residues 25-45 (KPSKGQKRHLSTCDGQNPPKK). Disordered regions lie at residues 27–87 (SKGQ…NEQT) and 132–163 (MYFD…QTFP). Lysine 68 is covalently cross-linked (Glycyl lysine isopeptide (Lys-Gly) (interchain with G-Cter in SUMO2)). Residues 142-163 (STTSQQANSQSTPEPSPSQTFP) show a composition bias toward low complexity. The DNA-binding element occupies 296-388 (VVCQIGMSSY…RVFLQDHCLA (93 aa)). Polar residues predominate over residues 414 to 431 (PTYPSVKSSQCHTGSSPR). The tract at residues 414–437 (PTYPSVKSSQCHTGSSPRGSGKKK) is disordered. Residue lysine 500 forms a Glycyl lysine isopeptide (Lys-Gly) (interchain with G-Cter in SUMO2) linkage. The 46-residue stretch at 551-596 (EDNIGNQLLRKMGWTGGGLGKSGEGIREPISVKEQHKREGLGLDVE) folds into the G-patch domain. Positions 600–664 (KIAKRDIEQI…DRYLVVGRKR (65 aa)) constitute an R3H domain. Residue serine 618 is modified to Phosphoserine. Residues lysine 666 and lysine 674 each participate in a glycyl lysine isopeptide (Lys-Gly) (interchain with G-Cter in SUMO2) cross-link.

In terms of assembly, interacts with NF-kappa-B. Interacts with XRN2. Interacts (via G-patch domain) with DHX15; promoting the RNA helicase activity of DHX15. As to expression, widely and constitutively expressed. Expressed at lower level in colon, peripheral blood lymphocytes, lung and kidney.

The protein resides in the nucleus. It localises to the nucleolus. In terms of biological role, enhances the ATPase activity of DHX15 by acting like a brace that tethers mobile sections of DHX15 together, stabilizing a functional conformation with high RNA affinity of DHX15. Involved in the constitutive silencing of the interferon beta promoter, independently of the virus-induced signals, and in the inhibition of the basal and cytokine-induced iNOS promoter activity. Also involved in the regulation of IL-8 transcription. May also act as a DNA-binding transcription regulator: interacts with a specific negative regulatory element (NRE) 5'-AATTCCTCTGA-3' to mediate transcriptional repression of certain NK-kappa-B responsive genes. The chain is NF-kappa-B-repressing factor from Homo sapiens (Human).